Here is a 609-residue protein sequence, read N- to C-terminus: Threonine--tRNA ligase (609 aa).

The segment at 215–506 (DHRIIGNEMK…LIEHTAGELP (292 aa)) is catalytic. Zn(2+)-binding residues include C307, H358, and H483.

It belongs to the class-II aminoacyl-tRNA synthetase family. Homodimer. Zn(2+) is required as a cofactor.

It is found in the cytoplasm. The catalysed reaction is tRNA(Thr) + L-threonine + ATP = L-threonyl-tRNA(Thr) + AMP + diphosphate + H(+). Functionally, catalyzes the attachment of threonine to tRNA(Thr) in a two-step reaction: L-threonine is first activated by ATP to form Thr-AMP and then transferred to the acceptor end of tRNA(Thr). Also edits incorrectly charged L-seryl-tRNA(Thr). The polypeptide is Threonine--tRNA ligase (Campylobacter hominis (strain ATCC BAA-381 / DSM 21671 / CCUG 45161 / LMG 19568 / NCTC 13146 / CH001A)).